Reading from the N-terminus, the 366-residue chain is Carbamoyl phosphate synthase small chain (366 aa).

The CPSase stretch occupies residues 1–174 (MQEIPAILVL…GERYTVDNPD (174 aa)). Ser48, Gly226, and Gly228 together coordinate L-glutamine. Residues 178–366 (HVVAFDYGIK…FTELMERLKN (189 aa)) enclose the Glutamine amidotransferase type-1 domain. Catalysis depends on Cys256, which acts as the Nucleophile. L-glutamine contacts are provided by Leu257, Gln260, Asn298, Gly300, and Phe301. Catalysis depends on residues His340 and Glu342.

Belongs to the CarA family. Composed of two chains; the small (or glutamine) chain promotes the hydrolysis of glutamine to ammonia, which is used by the large (or ammonia) chain to synthesize carbamoyl phosphate. Tetramer of heterodimers (alpha,beta)4.

The enzyme catalyses hydrogencarbonate + L-glutamine + 2 ATP + H2O = carbamoyl phosphate + L-glutamate + 2 ADP + phosphate + 2 H(+). It carries out the reaction L-glutamine + H2O = L-glutamate + NH4(+). It participates in amino-acid biosynthesis; L-arginine biosynthesis; carbamoyl phosphate from bicarbonate: step 1/1. The protein operates within pyrimidine metabolism; UMP biosynthesis via de novo pathway; (S)-dihydroorotate from bicarbonate: step 1/3. In terms of biological role, small subunit of the glutamine-dependent carbamoyl phosphate synthetase (CPSase). CPSase catalyzes the formation of carbamoyl phosphate from the ammonia moiety of glutamine, carbonate, and phosphate donated by ATP, constituting the first step of 2 biosynthetic pathways, one leading to arginine and/or urea and the other to pyrimidine nucleotides. The small subunit (glutamine amidotransferase) binds and cleaves glutamine to supply the large subunit with the substrate ammonia. The protein is Carbamoyl phosphate synthase small chain of Chlorobaculum tepidum (strain ATCC 49652 / DSM 12025 / NBRC 103806 / TLS) (Chlorobium tepidum).